The chain runs to 1500 residues: Alpha-1-macroglobulin (1500 aa).

The first 24 residues, 1-24 (MRRNQLPIPVFLLLLLLLPRDATA), serve as a signal peptide directing secretion. Residues Cys48 and Cys86 are joined by a disulfide bond. Residues Asn55, Asn61, and Asn157 are each glycosylated (N-linked (GlcNAc...) asparagine). 2 cysteine pairs are disulfide-bonded: Cys249-Cys298 and Cys267-Cys286. N-linked (GlcNAc...) asparagine glycosylation is found at Asn382 and Asn412. Cys469 and Cys562 are joined by a disulfide. Asn568 carries N-linked (GlcNAc...) asparagine glycosylation. 6 disulfides stabilise this stretch: Cys594/Cys785, Cys642/Cys689, Cys835/Cys863, Cys861/Cys897, Cys935/Cys1344, and Cys1094/Cys1142. Residues 686-746 (PRYCPMYQAY…QEVEVRETVR (61 aa)) form a bait region region. Residues Asn883 and Asn944 are each glycosylated (N-linked (GlcNAc...) asparagine). The isoglutamyl cysteine thioester (Cys-Gln) cross-link spans 986-989 (CGEQ). Asn1005 is a glycosylation site (N-linked (GlcNAc...) asparagine). The segment at 1360-1500 (EGEAPFTLKV…FSSDSEQGNA (141 aa)) is receptor-binding domain. Asn1390 and Asn1448 each carry an N-linked (GlcNAc...) asparagine glycan.

It belongs to the protease inhibitor I39 (alpha-2-macroglobulin) family. In terms of assembly, homotetramer; disulfide-linked. As to expression, widely expressed. Highest level in ovary, testis, uterus and prostate. Protein found in plasma.

Its subcellular location is the secreted. Functionally, is able to inhibit all four classes of proteinases by a unique 'trapping' mechanism. This protein has a peptide stretch, called the 'bait region' which contains specific cleavage sites for different proteinases. When a proteinase cleaves the bait region, a conformational change is induced in the protein which traps the proteinase. The entrapped enzyme remains active against low molecular weight substrates (activity against high molecular weight substrates is greatly reduced). Following cleavage in the bait region a thioester bond is hydrolyzed and mediates the covalent binding of the protein to the proteinase. In Rattus norvegicus (Rat), this protein is Alpha-1-macroglobulin.